Consider the following 321-residue polypeptide: Beta-ketoacyl-[acyl-carrier-protein] synthase III (321 aa).

Catalysis depends on residues Cys113 and His248. Residues 249-253 are ACP-binding; sequence QANAR. Asn278 is an active-site residue.

Belongs to the thiolase-like superfamily. FabH family. As to quaternary structure, homodimer.

The protein resides in the cytoplasm. It catalyses the reaction malonyl-[ACP] + acetyl-CoA + H(+) = 3-oxobutanoyl-[ACP] + CO2 + CoA. Its pathway is lipid metabolism; fatty acid biosynthesis. Functionally, catalyzes the condensation reaction of fatty acid synthesis by the addition to an acyl acceptor of two carbons from malonyl-ACP. Catalyzes the first condensation reaction which initiates fatty acid synthesis and may therefore play a role in governing the total rate of fatty acid production. Possesses both acetoacetyl-ACP synthase and acetyl transacylase activities. Its substrate specificity determines the biosynthesis of branched-chain and/or straight-chain of fatty acids. This Erythrobacter litoralis (strain HTCC2594) protein is Beta-ketoacyl-[acyl-carrier-protein] synthase III.